A 121-amino-acid polypeptide reads, in one-letter code: Fluoride-specific ion channel FluC 1 (121 aa).

Helical transmembrane passes span 3 to 23 (YVYI…ISFL), 35 to 55 (IANL…IAFF), 64 to 84 (AITT…LELI), and 92 to 112 (FITL…LCYV). Na(+)-binding residues include Gly-71 and Thr-74.

It belongs to the fluoride channel Fluc/FEX (TC 1.A.43) family.

The protein resides in the cell membrane. The enzyme catalyses fluoride(in) = fluoride(out). Na(+) is not transported, but it plays an essential structural role and its presence is essential for fluoride channel function. Functionally, fluoride-specific ion channel. Important for reducing fluoride concentration in the cell, thus reducing its toxicity. The chain is Fluoride-specific ion channel FluC 1 from Staphylococcus aureus (strain NCTC 8325 / PS 47).